The following is a 196-amino-acid chain: DnaA initiator-associating protein DiaA (196 aa).

An SIS domain is found at 34–196 (LVQSLLNGNK…DNTLFPHQDD (163 aa)).

It belongs to the SIS family. DiaA subfamily. As to quaternary structure, homotetramer; dimer of dimers.

Required for the timely initiation of chromosomal replication via direct interactions with the DnaA initiator protein. This Shigella flexneri serotype 5b (strain 8401) protein is DnaA initiator-associating protein DiaA.